The chain runs to 609 residues: ATP-dependent lipid A-core flippase (609 aa).

Transmembrane regions (helical) follow at residues 47–67 (LLAAIGSIFFSAADASMIYLI), 88–108 (ILMLMGVGMVGLLALRSVGSF), 167–187 (AIITVVQDGTFVIGLIVVMFV), 190–210 (WQLSLFLIVVGPFLGLFISII), 279–299 (VIQIIASLVLAFSLFTIAIFG), and 305–325 (GSSWLTAGSFASFFAAAAAIL). Residues 47-340 (LLAAIGSIFF…LTKVNVVIQK (294 aa)) form the ABC transmembrane type-1 domain. The region spanning 372 to 606 (VTIKDLSFAF…GGLYTRLYQS (235 aa)) is the ABC transporter domain. 404–411 (GKSGSGKT) contacts ATP.

It belongs to the ABC transporter superfamily. Lipid exporter (TC 3.A.1.106) family. Homodimer.

Its subcellular location is the cell inner membrane. It carries out the reaction ATP + H2O + lipid A-core oligosaccharideSide 1 = ADP + phosphate + lipid A-core oligosaccharideSide 2.. Functionally, involved in lipopolysaccharide (LPS) biosynthesis. Translocates lipid A-core from the inner to the outer leaflet of the inner membrane. Transmembrane domains (TMD) form a pore in the inner membrane and the ATP-binding domain (NBD) is responsible for energy generation. The chain is ATP-dependent lipid A-core flippase from Francisella tularensis subsp. holarctica (strain LVS).